We begin with the raw amino-acid sequence, 494 residues long: tRNA-2-methylthio-N(6)-dimethylallyladenosine synthase (494 aa).

In terms of domain architecture, MTTase N-terminal spans 5–121; that stretch reads RTYQVRTYGC…LPALLERARV (117 aa). [4Fe-4S] cluster contacts are provided by C14, C50, C84, C158, C162, and C165. A Radical SAM core domain is found at 144–374; the sequence is RESVYAAWVA…LELQERISEE (231 aa). One can recognise a TRAM domain in the interval 377–446; the sequence is AKFVGREVEV…PHHLVADSGI (70 aa). The segment covering 458–468 has biased composition (basic and acidic residues); that stretch reads WEARNAPERRP. A disordered region spans residues 458-494; sequence WEARNAPERRPTGVLLGMPKVGAPEPQPSVVGGCCDS.

This sequence belongs to the methylthiotransferase family. MiaB subfamily. Monomer. [4Fe-4S] cluster serves as cofactor.

It is found in the cytoplasm. The catalysed reaction is N(6)-dimethylallyladenosine(37) in tRNA + (sulfur carrier)-SH + AH2 + 2 S-adenosyl-L-methionine = 2-methylsulfanyl-N(6)-dimethylallyladenosine(37) in tRNA + (sulfur carrier)-H + 5'-deoxyadenosine + L-methionine + A + S-adenosyl-L-homocysteine + 2 H(+). In terms of biological role, catalyzes the methylthiolation of N6-(dimethylallyl)adenosine (i(6)A), leading to the formation of 2-methylthio-N6-(dimethylallyl)adenosine (ms(2)i(6)A) at position 37 in tRNAs that read codons beginning with uridine. The sequence is that of tRNA-2-methylthio-N(6)-dimethylallyladenosine synthase from Thermobifida fusca (strain YX).